The following is a 305-amino-acid chain: Tyrosine recombinase XerC (305 aa).

The 92-residue stretch at 4 to 95 (TSIQALINKW…AVKNFYRFLE (92 aa)) folds into the Core-binding (CB) domain. The 183-residue stretch at 116 to 298 (LLPKALSEDD…SIKHLEAVYT (183 aa)) folds into the Tyr recombinase domain. Catalysis depends on residues Arg-159, Lys-182, His-250, Arg-253, and His-276. Tyr-285 serves as the catalytic O-(3'-phospho-DNA)-tyrosine intermediate.

This sequence belongs to the 'phage' integrase family. XerC subfamily. As to quaternary structure, forms a cyclic heterotetrameric complex composed of two molecules of XerC and two molecules of XerD.

The protein resides in the cytoplasm. Functionally, site-specific tyrosine recombinase, which acts by catalyzing the cutting and rejoining of the recombining DNA molecules. The XerC-XerD complex is essential to convert dimers of the bacterial chromosome into monomers to permit their segregation at cell division. It also contributes to the segregational stability of plasmids. This is Tyrosine recombinase XerC from Rickettsia africae (strain ESF-5).